The following is a 260-amino-acid chain: Isoprenyl transferase (260 aa).

The active site involves Asp-40. Asp-40 is a Mg(2+) binding site. Substrate is bound by residues 41-44 (GNGR), Trp-45, Arg-53, His-57, and 85-87 (STE). Asn-88 (proton acceptor) is an active-site residue. Residues Trp-89, Arg-91, Arg-208, and 214–216 (RLS) each bind substrate. A Mg(2+)-binding site is contributed by Glu-227.

It belongs to the UPP synthase family. As to quaternary structure, homodimer. Mg(2+) is required as a cofactor.

Functionally, catalyzes the condensation of isopentenyl diphosphate (IPP) with allylic pyrophosphates generating different type of terpenoids. The polypeptide is Isoprenyl transferase (Bacillus subtilis (strain 168)).